The following is a 309-amino-acid chain: Aspartate carbamoyltransferase catalytic subunit (309 aa).

Residues R54 and T55 each contribute to the carbamoyl phosphate site. L-aspartate is bound at residue K82. Carbamoyl phosphate-binding residues include R104, H132, and Q135. 2 residues coordinate L-aspartate: R165 and R219. Carbamoyl phosphate-binding residues include G260 and P261.

It belongs to the aspartate/ornithine carbamoyltransferase superfamily. ATCase family. As to quaternary structure, heterododecamer (2C3:3R2) of six catalytic PyrB chains organized as two trimers (C3), and six regulatory PyrI chains organized as three dimers (R2).

The enzyme catalyses carbamoyl phosphate + L-aspartate = N-carbamoyl-L-aspartate + phosphate + H(+). The protein operates within pyrimidine metabolism; UMP biosynthesis via de novo pathway; (S)-dihydroorotate from bicarbonate: step 2/3. Functionally, catalyzes the condensation of carbamoyl phosphate and aspartate to form carbamoyl aspartate and inorganic phosphate, the committed step in the de novo pyrimidine nucleotide biosynthesis pathway. The chain is Aspartate carbamoyltransferase catalytic subunit from Parafrankia sp. (strain EAN1pec).